The chain runs to 147 residues: Large ribosomal subunit protein uL15 (147 aa).

Basic and acidic residues predominate over residues 1–20 (MTMHLNDLKPADGARTERTR). The tract at residues 1 to 64 (MTMHLNDLKP…GGQTPMQRRL (64 aa)) is disordered. A compositionally biased stretch (gly residues) spans 23 to 33 (RGIGSGLGKTC). Over residues 34 to 47 (GRGHKGSFARKGGG) the composition is skewed to basic residues.

The protein belongs to the universal ribosomal protein uL15 family. In terms of assembly, part of the 50S ribosomal subunit.

In terms of biological role, binds to the 23S rRNA. This Xanthomonas campestris pv. campestris (strain 8004) protein is Large ribosomal subunit protein uL15.